An 83-amino-acid polypeptide reads, in one-letter code: MAQMQATHTIEGFLAVEVAPRAFVAENGHVLTRLSATKWGGGEGLEILNYEGPGTVEVSDEKLAEAQRASEVEAELRREVGKE.

This chain is Gene 3 protein (3), found in Mycobacterium (Mycobacteriophage L5).